The following is a 296-amino-acid chain: 2-methylisocitrate lyase (296 aa).

45-47 (SGG) provides a ligand contact to substrate. Residues Asp85 and Asp87 each contribute to the Mg(2+) site. Residues 123 to 124 (CG), Arg158, Glu188, 210 to 212 (NIT), Arg241, and Arg270 contribute to the substrate site.

Belongs to the isocitrate lyase/PEP mutase superfamily. Methylisocitrate lyase family. As to quaternary structure, homotetramer; dimer of dimers. It depends on Mg(2+) as a cofactor.

The enzyme catalyses (2S,3R)-3-hydroxybutane-1,2,3-tricarboxylate = pyruvate + succinate. Its pathway is organic acid metabolism; propanoate degradation. Its function is as follows. Involved in the catabolism of short chain fatty acids (SCFA) via the 2-methylcitrate cycle I (propionate degradation route). Catalyzes the thermodynamically favored C-C bond cleavage of (2R,3S)-2-methylisocitrate to yield pyruvate and succinate via an alpha-carboxy-carbanion intermediate. The protein is 2-methylisocitrate lyase of Escherichia coli (strain K12).